The chain runs to 140 residues: Nucleoside diphosphate kinase (140 aa).

The ATP site is built by Lys-11, Phe-59, Arg-87, Thr-93, Arg-104, and Asn-114. His-117 functions as the Pros-phosphohistidine intermediate in the catalytic mechanism.

The protein belongs to the NDK family. Homotetramer. It depends on Mg(2+) as a cofactor.

Its subcellular location is the cytoplasm. The catalysed reaction is a 2'-deoxyribonucleoside 5'-diphosphate + ATP = a 2'-deoxyribonucleoside 5'-triphosphate + ADP. The enzyme catalyses a ribonucleoside 5'-diphosphate + ATP = a ribonucleoside 5'-triphosphate + ADP. Its function is as follows. Major role in the synthesis of nucleoside triphosphates other than ATP. The ATP gamma phosphate is transferred to the NDP beta phosphate via a ping-pong mechanism, using a phosphorylated active-site intermediate. The chain is Nucleoside diphosphate kinase from Rickettsia akari (strain Hartford).